Consider the following 304-residue polypeptide: UDP-3-O-acyl-N-acetylglucosamine deacetylase (304 aa).

Residues histidine 78, histidine 237, and aspartate 241 each coordinate Zn(2+). The Proton donor role is filled by histidine 264.

It belongs to the LpxC family. Zn(2+) is required as a cofactor.

The enzyme catalyses a UDP-3-O-[(3R)-3-hydroxyacyl]-N-acetyl-alpha-D-glucosamine + H2O = a UDP-3-O-[(3R)-3-hydroxyacyl]-alpha-D-glucosamine + acetate. It participates in glycolipid biosynthesis; lipid IV(A) biosynthesis; lipid IV(A) from (3R)-3-hydroxytetradecanoyl-[acyl-carrier-protein] and UDP-N-acetyl-alpha-D-glucosamine: step 2/6. Catalyzes the hydrolysis of UDP-3-O-myristoyl-N-acetylglucosamine to form UDP-3-O-myristoylglucosamine and acetate, the committed step in lipid A biosynthesis. In Alcanivorax borkumensis (strain ATCC 700651 / DSM 11573 / NCIMB 13689 / SK2), this protein is UDP-3-O-acyl-N-acetylglucosamine deacetylase.